Reading from the N-terminus, the 296-residue chain is GTPase Era (296 aa).

Residues 7–174 (RTGFVAIVGR…LEEIAQRLPE (168 aa)) enclose the Era-type G domain. Positions 15–22 (GRPNVGKS) are G1. Position 15 to 22 (15 to 22 (GRPNVGKS)) interacts with GTP. The tract at residues 41–45 (QTTRH) is G2. The interval 62–65 (DTPG) is G3. GTP-binding positions include 62–66 (DTPGF) and 123–126 (SKID). The interval 123–126 (SKID) is G4. A G5 region spans residues 153–155 (VSA). Positions 197–281 (VREKIFRLVG…HLEVYIKVRK (85 aa)) constitute a KH type-2 domain.

This sequence belongs to the TRAFAC class TrmE-Era-EngA-EngB-Septin-like GTPase superfamily. Era GTPase family. Monomer.

Its subcellular location is the cytoplasm. The protein resides in the cell inner membrane. Its function is as follows. An essential GTPase that binds both GDP and GTP, with rapid nucleotide exchange. Plays a role in 16S rRNA processing and 30S ribosomal subunit biogenesis and possibly also in cell cycle regulation and energy metabolism. The chain is GTPase Era from Bordetella avium (strain 197N).